The sequence spans 693 residues: Heat shock protein homolog SSE1 (693 aa).

Ser-2 carries the post-translational modification N-acetylserine. Lys-195 is covalently cross-linked (Glycyl lysine isopeptide (Lys-Gly) (interchain with G-Cter in ubiquitin)). Thr-242 carries the post-translational modification Phosphothreonine. The interval 653–693 (IRSKQEASQMAAMAEKLAAQRKAEAEKKEEKKDTEGDVDMD) is disordered. Position 660 is a phosphoserine (Ser-660). Over residues 673–687 (RKAEAEKKEEKKDTE) the composition is skewed to basic and acidic residues.

The protein belongs to the heat shock protein 70 family.

It localises to the cytoplasm. In terms of biological role, has a calcium-dependent calmodulin-binding activity. Required for normal growth at various temperatures. The protein is Heat shock protein homolog SSE1 (SSE1) of Saccharomyces cerevisiae (strain ATCC 204508 / S288c) (Baker's yeast).